The primary structure comprises 258 residues: 5'-nucleotidase SurE (258 aa).

4 residues coordinate a divalent metal cation: D8, D9, S39, and N95.

It belongs to the SurE nucleotidase family. Requires a divalent metal cation as cofactor.

The protein localises to the cytoplasm. It carries out the reaction a ribonucleoside 5'-phosphate + H2O = a ribonucleoside + phosphate. In terms of biological role, nucleotidase that shows phosphatase activity on nucleoside 5'-monophosphates. The protein is 5'-nucleotidase SurE of Methanobrevibacter smithii (strain ATCC 35061 / DSM 861 / OCM 144 / PS).